A 560-amino-acid polypeptide reads, in one-letter code: Protein AATF (560 aa).

Position 2 is an N-acetylalanine (Ala-2). A phosphoserine mark is found at Ser-61 and Ser-63. A disordered region spans residues 76–208; the sequence is TSRKAWNEDH…GDRNSEDDGV (133 aa). Residues 94-129 show a composition bias toward acidic residues; it reads SDEEISDEEGSGDEDSEGLGLEEYDEDDLGAAEEQE. Residues Ser-150 and Ser-155 each carry the phosphoserine modification. Residues 156–165 are compositionally biased toward basic and acidic residues; sequence DFEKFTKGMD. The span at 168 to 195 shows a compositional bias: acidic residues; the sequence is GSSEEEEDEESGMEEGDDAEDSQGESEE. Residues Ser-203, Ser-273, Ser-316, Ser-320, and Ser-321 each carry the phosphoserine modification. The interval 273–315 is POLR2J binding; the sequence is SALKNSHKALKALLRSLVGLQEELLFQYPDTRYLVDGTKPNAG. The segment at 309-333 is disordered; sequence GTKPNAGSEEISSEDDELVEEKKQQ. Residues 316-372 are RB1 binding; sequence SEEISSEDDELVEEKKQQRRRVPAKRKLEMEDYPSFMAKRFADFTVYRNRTLQKWHD. The interval 373-472 is RB1 and SP1 binding; it reads KTKLASGKLG…FYHQLLRELI (100 aa).

This sequence belongs to the AATF family. In terms of assembly, part of the small subunit (SSU) processome, composed of more than 70 proteins and the RNA chaperone small nucleolar RNA (snoRNA) U3. Interacts with POLR2J, RB1/RB, RBL1/P107 and RBL2/P130. Interacts with PAWR and SP1. May also bind MAPT. In terms of processing, hyperphosphorylated during the G1/S phase transition. In terms of tissue distribution, ubiquitously expressed. Expressed at high levels in brain, heart, kidney, placenta and thymus.

It localises to the nucleus. The protein localises to the nucleolus. Functionally, part of the small subunit (SSU) processome, first precursor of the small eukaryotic ribosomal subunit. During the assembly of the SSU processome in the nucleolus, many ribosome biogenesis factors, an RNA chaperone and ribosomal proteins associate with the nascent pre-rRNA and work in concert to generate RNA folding, modifications, rearrangements and cleavage as well as targeted degradation of pre-ribosomal RNA by the RNA exosome. May function as a general inhibitor of the histone deacetylase HDAC1. Binding to the pocket region of RB1 may displace HDAC1 from RB1/E2F complexes, leading to activation of E2F target genes and cell cycle progression. Conversely, displacement of HDAC1 from SP1 bound to the CDKN1A promoter leads to increased expression of this CDK inhibitor and blocks cell cycle progression. Also antagonizes PAWR mediated induction of aberrant amyloid peptide production in Alzheimer disease (presenile and senile dementia), although the molecular basis for this phenomenon has not been described to date. In Homo sapiens (Human), this protein is Protein AATF.